Here is a 414-residue protein sequence, read N- to C-terminus: Myb1 protein (414 aa).

Myb-like domains follow at residues 242 to 266 (WNEV…LYYG), 268 to 320 (FEDD…IKIN), and 328 to 381 (KVKL…TNLN).

The protein localises to the nucleus. In terms of biological role, transcriptional activator. Has a role in the parasite erythrocytic cycle where it directly regulates key genes involved in cell cycle regulation and progression. Binds directly to Myb regulatory elements. The polypeptide is Myb1 protein (Plasmodium falciparum (isolate 3D7)).